A 186-amino-acid chain; its full sequence is Peptidyl-tRNA hydrolase (186 aa).

Y14 serves as a coordination point for tRNA. The active-site Proton acceptor is the H19. 3 residues coordinate tRNA: Y64, N66, and N112.

It belongs to the PTH family. As to quaternary structure, monomer.

The protein localises to the cytoplasm. The enzyme catalyses an N-acyl-L-alpha-aminoacyl-tRNA + H2O = an N-acyl-L-amino acid + a tRNA + H(+). In terms of biological role, hydrolyzes ribosome-free peptidyl-tRNAs (with 1 or more amino acids incorporated), which drop off the ribosome during protein synthesis, or as a result of ribosome stalling. Its function is as follows. Catalyzes the release of premature peptidyl moieties from peptidyl-tRNA molecules trapped in stalled 50S ribosomal subunits, and thus maintains levels of free tRNAs and 50S ribosomes. In Bacillus cereus (strain Q1), this protein is Peptidyl-tRNA hydrolase.